The sequence spans 419 residues: Glutamyl-tRNA reductase (419 aa).

Residues 50–53 (TCNR), Ser108, 113–115 (ETQ), and Gln119 contribute to the substrate site. The active-site Nucleophile is the Cys51. 188–193 (GAGEMI) lines the NADP(+) pocket.

Belongs to the glutamyl-tRNA reductase family. Homodimer.

It catalyses the reaction (S)-4-amino-5-oxopentanoate + tRNA(Glu) + NADP(+) = L-glutamyl-tRNA(Glu) + NADPH + H(+). Its pathway is porphyrin-containing compound metabolism; protoporphyrin-IX biosynthesis; 5-aminolevulinate from L-glutamyl-tRNA(Glu): step 1/2. Its function is as follows. Catalyzes the NADPH-dependent reduction of glutamyl-tRNA(Glu) to glutamate 1-semialdehyde (GSA). This Albidiferax ferrireducens (strain ATCC BAA-621 / DSM 15236 / T118) (Rhodoferax ferrireducens) protein is Glutamyl-tRNA reductase.